The chain runs to 240 residues: Acyl-coenzyme A thioesterase THEM4 (240 aa).

The transit peptide at 1 to 36 (MLRSCAARLRTLGALCLPPVGRRLPGSEPRPELRSF) directs the protein to the mitochondrion. Phosphoserine occurs at positions 37 and 38. N6-succinyllysine occurs at positions 55 and 66. Residue K74 is modified to N6-acetyllysine. N6-succinyllysine is present on K98. D161 functions as the Proton donor/acceptor in the catalytic mechanism. Residues N183, K185, and 206–207 (RK) each bind substrate. Residue K207 is modified to N6-succinyllysine.

It belongs to the THEM4/THEM5 thioesterase family. In terms of assembly, homodimer and homotetramer. Interacts with AKT1 in the cytosol. Phosphorylated. In terms of tissue distribution, expressed predominantly in skeletal muscle, testis, uterus, brain and kidney. Down-regulated in glioblastoma or glioma compared to non-neoplastic brain due to promoter hypermethylation.

Its subcellular location is the cell membrane. It localises to the cell projection. The protein resides in the ruffle membrane. The protein localises to the cytoplasm. It is found in the mitochondrion. Its subcellular location is the mitochondrion inner membrane. It localises to the mitochondrion intermembrane space. The enzyme catalyses hexadecanoyl-CoA + H2O = hexadecanoate + CoA + H(+). The catalysed reaction is octanoyl-CoA + H2O = octanoate + CoA + H(+). It carries out the reaction decanoyl-CoA + H2O = decanoate + CoA + H(+). It catalyses the reaction dodecanoyl-CoA + H2O = dodecanoate + CoA + H(+). The enzyme catalyses tetradecanoyl-CoA + H2O = tetradecanoate + CoA + H(+). The catalysed reaction is (9Z)-octadecenoyl-CoA + H2O = (9Z)-octadecenoate + CoA + H(+). It carries out the reaction (5Z,8Z,11Z,14Z)-eicosatetraenoyl-CoA + H2O = (5Z,8Z,11Z,14Z)-eicosatetraenoate + CoA + H(+). In terms of biological role, has acyl-CoA thioesterase activity towards medium and long-chain (C14 to C18) fatty acyl-CoA substrates, and probably plays a role in mitochondrial fatty acid metabolism. Plays a role in the apoptotic process, possibly via its regulation of AKT1 activity. According to PubMed:11598301, inhibits AKT1 phosphorylation and activity. According to PubMed:17615157, enhances AKT1 activity by favoring its phosphorylation and translocation to plasma membrane. This Homo sapiens (Human) protein is Acyl-coenzyme A thioesterase THEM4 (THEM4).